A 147-amino-acid chain; its full sequence is Proteinase inhibitor type-2 (147 aa).

The N-terminal stretch at 1-25 (MAVHKEVSFVAYLLIVLGMFLYVDA) is a signal peptide. 2 tandem repeats follow at residues 25-81 (ALGC…DPKN) and 82-141 (PKAC…DEPK). 8 disulfides stabilise this stretch: Cys28–Cys116, Cys32–Cys112, Cys40–Cys122, Cys52–Cys89, Cys55–Cys73, Cys56–Cys85, Cys62–Cys98, and Cys115–Cys133.

The protein belongs to the protease inhibitor I20 (potato type II proteinase inhibitor) family.

The sequence is that of Proteinase inhibitor type-2 from Solanum tuberosum (Potato).